The following is a 201-amino-acid chain: Recombination protein RecR (201 aa).

A C4-type zinc finger spans residues 60–75; sequence CSRCGNVDTVDPCTVC. A Toprim domain is found at 83–178; it reads SVIIVVEDVS…KITRLAHGVP (96 aa).

It belongs to the RecR family.

Its function is as follows. May play a role in DNA repair. It seems to be involved in an RecBC-independent recombinational process of DNA repair. It may act with RecF and RecO. The sequence is that of Recombination protein RecR from Rhizobium etli (strain CIAT 652).